Consider the following 681-residue polypeptide: Ribosomal L1 domain-containing protein CG13096 (681 aa).

2 disordered regions span residues 1–248 (MVKV…AKSK) and 579–681 (DAAP…DDEE). Serine 15 and serine 17 each carry phosphoserine. The span at 54 to 74 (VKKDAIKKEPEVSKKGAEKKQ) shows a compositional bias: basic and acidic residues. Serine 89 is subject to Phosphoserine. A compositionally biased stretch (low complexity) spans 103–112 (KPAASGAPVG). A Phosphoserine modification is found at serine 128. Low complexity predominate over residues 189-217 (QAAPAKPAKAQPASQLQKKAKAVQKLSKP). The segment covering 599 to 610 (KESSSEGAKADA) has biased composition (basic and acidic residues). Over residues 611–681 (ESDEEEEVEE…EDDDDDDDEE (71 aa)) the composition is skewed to acidic residues.

It belongs to the universal ribosomal protein uL1 family. Highly divergent.

This is Ribosomal L1 domain-containing protein CG13096 from Drosophila melanogaster (Fruit fly).